The sequence spans 76 residues: Conotoxin TxMEKL-011 (76 aa).

An N-terminal signal peptide occupies residues 1 to 19 (MEKLTILLLVAAVLMSTQA). A propeptide spanning residues 20–45 (LVERAGENRSKENIKFLLKRKRAADR) is cleaved from the precursor. Intrachain disulfides connect Cys-51–Cys-65, Cys-58–Cys-69, and Cys-64–Cys-73.

The protein belongs to the conotoxin O2 superfamily. In terms of tissue distribution, expressed by the venom duct.

The protein localises to the secreted. The protein is Conotoxin TxMEKL-011 of Conus textile (Cloth-of-gold cone).